Consider the following 146-residue polypeptide: Hemoglobin subunit beta-1 (146 aa).

The Globin domain maps to 2–146 (HWTAEEKALI…VAHALARRYH (145 aa)). A heme b-binding site is contributed by His-92.

The protein belongs to the globin family. As to quaternary structure, heterotetramer of two alpha chains and two beta chains. As to expression, red blood cells.

Functionally, involved in oxygen transport from the lung to the various peripheral tissues. The chain is Hemoglobin subunit beta-1 from Saara hardwickii (Indian spiny-tailed lizard).